Consider the following 370-residue polypeptide: Aspartate-semialdehyde dehydrogenase (370 aa).

NADP(+)-binding positions include 10–13 (RGMV), 37–38 (TS), and Gln-73. Arg-102 contributes to the phosphate binding site. Catalysis depends on Cys-135, which acts as the Acyl-thioester intermediate. Residue Gln-162 participates in substrate binding. Residues 165–166 (SG) and Pro-193 contribute to the NADP(+) site. Glu-241 is a binding site for substrate. Lys-244 provides a ligand contact to phosphate. Substrate is bound at residue Arg-268. His-275 serves as the catalytic Proton acceptor. Position 351 (Gln-351) interacts with NADP(+).

This sequence belongs to the aspartate-semialdehyde dehydrogenase family. As to quaternary structure, homodimer.

It carries out the reaction L-aspartate 4-semialdehyde + phosphate + NADP(+) = 4-phospho-L-aspartate + NADPH + H(+). Its pathway is amino-acid biosynthesis; L-lysine biosynthesis via DAP pathway; (S)-tetrahydrodipicolinate from L-aspartate: step 2/4. It functions in the pathway amino-acid biosynthesis; L-methionine biosynthesis via de novo pathway; L-homoserine from L-aspartate: step 2/3. The protein operates within amino-acid biosynthesis; L-threonine biosynthesis; L-threonine from L-aspartate: step 2/5. Catalyzes the NADPH-dependent formation of L-aspartate-semialdehyde (L-ASA) by the reductive dephosphorylation of L-aspartyl-4-phosphate. The chain is Aspartate-semialdehyde dehydrogenase (asd) from Pseudomonas aeruginosa (strain ATCC 15692 / DSM 22644 / CIP 104116 / JCM 14847 / LMG 12228 / 1C / PRS 101 / PAO1).